Here is a 93-residue protein sequence, read N- to C-terminus: Protein YzgL (93 aa).

The sequence is that of Protein YzgL (yzgL) from Escherichia coli (strain K12).